The following is a 565-amino-acid chain: NAD-dependent malic enzyme (565 aa).

The Proton donor role is filled by tyrosine 104. An NAD(+)-binding site is contributed by arginine 157. Lysine 175 serves as the catalytic Proton acceptor. A divalent metal cation contacts are provided by glutamate 246, aspartate 247, and aspartate 270. Aspartate 270 and asparagine 418 together coordinate NAD(+).

The protein belongs to the malic enzymes family. Homotetramer. Requires Mg(2+) as cofactor. The cofactor is Mn(2+).

The catalysed reaction is (S)-malate + NAD(+) = pyruvate + CO2 + NADH. It carries out the reaction oxaloacetate + H(+) = pyruvate + CO2. The protein is NAD-dependent malic enzyme of Salmonella agona (strain SL483).